The primary structure comprises 446 residues: Tubulin alpha-2 chain (446 aa).

Positions 1 to 4 (MREC) match the MREC motif motif. Positions 11, 68, 137, 141, 142, 176, 203, and 225 each coordinate GTP. Glutamate 68 contributes to the Mg(2+) binding site. Glutamate 251 is a catalytic residue.

The protein belongs to the tubulin family. In terms of assembly, dimer of alpha and beta chains. A typical microtubule is a hollow water-filled tube with an outer diameter of 25 nm and an inner diameter of 15 nM. Alpha-beta heterodimers associate head-to-tail to form protofilaments running lengthwise along the microtubule wall with the beta-tubulin subunit facing the microtubule plus end conferring a structural polarity. Microtubules usually have 13 protofilaments but different protofilament numbers can be found in some organisms and specialized cells. Mg(2+) serves as cofactor. Some glutamate residues at the C-terminus are polyglycylated, resulting in polyglycine chains on the gamma-carboxyl group. Glycylation is mainly limited to tubulin incorporated into axonemes (cilia and flagella) whereas glutamylation is prevalent in neuronal cells, centrioles, axonemes, and the mitotic spindle. Both modifications can coexist on the same protein on adjacent residues, and lowering polyglycylation levels increases polyglutamylation, and reciprocally. The precise function of polyglycylation is still unclear. Post-translationally, some glutamate residues at the C-terminus are polyglutamylated, resulting in polyglutamate chains on the gamma-carboxyl group. Polyglutamylation plays a key role in microtubule severing by spastin (SPAST). SPAST preferentially recognizes and acts on microtubules decorated with short polyglutamate tails: severing activity by SPAST increases as the number of glutamates per tubulin rises from one to eight, but decreases beyond this glutamylation threshold. In terms of tissue distribution, testis specific.

The protein resides in the cytoplasm. It localises to the cytoskeleton. It catalyses the reaction GTP + H2O = GDP + phosphate + H(+). In terms of biological role, tubulin is the major constituent of microtubules, a cylinder consisting of laterally associated linear protofilaments composed of alpha- and beta-tubulin heterodimers. Microtubules grow by the addition of GTP-tubulin dimers to the microtubule end, where a stabilizing cap forms. Below the cap, tubulin dimers are in GDP-bound state, owing to GTPase activity of alpha-tubulin. This chain is Tubulin alpha-2 chain, found in Gallus gallus (Chicken).